Consider the following 155-residue polypeptide: Peptide methionine sulfoxide reductase MsrB (155 aa).

The MsrB domain maps to 15 to 137 (REALIATLNA…NSVSLTFIPT (123 aa)). Residues cysteine 54, cysteine 57, cysteine 103, and cysteine 106 each contribute to the Zn(2+) site. The Nucleophile role is filled by cysteine 126.

This sequence belongs to the MsrB Met sulfoxide reductase family. Requires Zn(2+) as cofactor.

The catalysed reaction is L-methionyl-[protein] + [thioredoxin]-disulfide + H2O = L-methionyl-(R)-S-oxide-[protein] + [thioredoxin]-dithiol. The protein is Peptide methionine sulfoxide reductase MsrB of Xylella fastidiosa (strain 9a5c).